The chain runs to 473 residues: Glutamate--tRNA ligase 1 (473 aa).

Positions 23–33 (PSPTGLLHVGG) match the 'HIGH' region motif. The short motif at 252–256 (KLSKR) is the 'KMSKS' region element. Lys255 contacts ATP.

It belongs to the class-I aminoacyl-tRNA synthetase family. Glutamate--tRNA ligase type 1 subfamily. As to quaternary structure, monomer.

The protein resides in the cytoplasm. The enzyme catalyses tRNA(Glu) + L-glutamate + ATP = L-glutamyl-tRNA(Glu) + AMP + diphosphate. Its function is as follows. Catalyzes the attachment of glutamate to tRNA(Glu) in a two-step reaction: glutamate is first activated by ATP to form Glu-AMP and then transferred to the acceptor end of tRNA(Glu). This Granulibacter bethesdensis (strain ATCC BAA-1260 / CGDNIH1) protein is Glutamate--tRNA ligase 1.